A 505-amino-acid polypeptide reads, in one-letter code: Maturase K (505 aa).

Belongs to the intron maturase 2 family. MatK subfamily.

The protein localises to the plastid. Its subcellular location is the chloroplast. In terms of biological role, usually encoded in the trnK tRNA gene intron. Probably assists in splicing its own and other chloroplast group II introns. The polypeptide is Maturase K (Cubanola domingensis).